The following is a 186-amino-acid chain: Elongation factor P (186 aa).

The protein belongs to the elongation factor P family.

It is found in the cytoplasm. It functions in the pathway protein biosynthesis; polypeptide chain elongation. Its function is as follows. Involved in peptide bond synthesis. Stimulates efficient translation and peptide-bond synthesis on native or reconstituted 70S ribosomes in vitro. Probably functions indirectly by altering the affinity of the ribosome for aminoacyl-tRNA, thus increasing their reactivity as acceptors for peptidyl transferase. This chain is Elongation factor P, found in Acidobacterium capsulatum (strain ATCC 51196 / DSM 11244 / BCRC 80197 / JCM 7670 / NBRC 15755 / NCIMB 13165 / 161).